Consider the following 309-residue polypeptide: Olfactory receptor 4A47 (309 aa).

Over 1–23 (MEPRKNVTDFVLLGFTQNPKEQK) the chain is Extracellular. N6 is a glycosylation site (N-linked (GlcNAc...) asparagine). Residues 24-47 (VLFVMFLLFYILTMVGNLLIVVTV) form a helical membrane-spanning segment. The Cytoplasmic portion of the chain corresponds to 48-55 (TVSETLGS). A helical membrane pass occupies residues 56 to 77 (PMYFFLAGLSFIDIIYSSSISP). Topologically, residues 78–98 (RLISGLFFGNNSISFQSCMAQ) are extracellular. N-linked (GlcNAc...) asparagine glycosylation is present at N87. A disulfide bond links C95 and C187. The chain crosses the membrane as a helical span at residues 99 to 118 (LFIEHIFGGSEVFLLLVMAY). Over 119–137 (DCYVAICKPLHYLVIMRQW) the chain is Cytoplasmic. The chain crosses the membrane as a helical span at residues 138-156 (VCVVLLVVSWVGGFLHSVF). At 157–193 (QLSIIYGLPFCGPNVIDHFFCDMYPLLKLVCTDTHAI) the chain is on the extracellular side. The chain crosses the membrane as a helical span at residues 194-217 (GLLVVANGGLACTIVFLLLLISYG). The Cytoplasmic portion of the chain corresponds to 218–233 (VILHSLKNLSQKGRQK). Residues 234–256 (ALSTCSSHMTVVVFFFVPCIFMY) traverse the membrane as a helical segment. Topologically, residues 257–267 (ARPARTFPIDK) are extracellular. A helical membrane pass occupies residues 268 to 287 (SVSVFYTVITPMLNPLIYTL). Over 288-309 (RNSEMTSAMKKLWRRDLISSST) the chain is Cytoplasmic.

It belongs to the G-protein coupled receptor 1 family.

It is found in the cell membrane. In terms of biological role, odorant receptor. The chain is Olfactory receptor 4A47 (OR4A47) from Homo sapiens (Human).